A 106-amino-acid polypeptide reads, in one-letter code: NADH-quinone oxidoreductase subunit K (106 aa).

3 consecutive transmembrane segments (helical) span residues 10–30, 35–55, and 67–87; these read IHYYLILAMIIFTIGVAGVMV, VLIFMSVELILNSVNLVFVTF, and VVFFVMAIAAAEAAIGLAIVI.

This sequence belongs to the complex I subunit 4L family. As to quaternary structure, NDH-1 is composed of 14 different subunits. Subunits NuoA, H, J, K, L, M, N constitute the membrane sector of the complex.

It is found in the cell inner membrane. The catalysed reaction is a quinone + NADH + 5 H(+)(in) = a quinol + NAD(+) + 4 H(+)(out). Functionally, NDH-1 shuttles electrons from NADH, via FMN and iron-sulfur (Fe-S) centers, to quinones in the respiratory chain. The immediate electron acceptor for the enzyme in this species is believed to be ubiquinone. Couples the redox reaction to proton translocation (for every two electrons transferred, four hydrogen ions are translocated across the cytoplasmic membrane), and thus conserves the redox energy in a proton gradient. In Leptospira borgpetersenii serovar Hardjo-bovis (strain JB197), this protein is NADH-quinone oxidoreductase subunit K.